The chain runs to 137 residues: Large ribosomal subunit protein uL16 (137 aa).

The protein belongs to the universal ribosomal protein uL16 family. In terms of assembly, part of the 50S ribosomal subunit.

Binds 23S rRNA and is also seen to make contacts with the A and possibly P site tRNAs. The polypeptide is Large ribosomal subunit protein uL16 (Legionella pneumophila (strain Paris)).